A 513-amino-acid polypeptide reads, in one-letter code: Calcium-dependent protein kinase 2 (513 aa).

Residues 65–323 enclose the Protein kinase domain; the sequence is YSFGKELGRG…SAQVLQHQWL (259 aa). ATP contacts are provided by residues 71–79 and lysine 94; that span reads LGRGQFGVT. The Proton acceptor role is filled by aspartate 189. The autoinhibitory domain stretch occupies residues 329–359; sequence ASDKPIDSAVLSRMKQFRAMNKLKKMALKVI. EF-hand domains follow at residues 366–401, 402–437, 438–473, and 478–508; these read EEIK…LGSK, LSEA…RHKL, ERDE…HEMG, and IREI…GMQQ. Residues aspartate 379, aspartate 381, serine 383, threonine 385, glutamate 390, aspartate 415, aspartate 417, asparagine 419, serine 421, glutamate 426, aspartate 451, aspartate 453, serine 455, glutamate 462, aspartate 486, aspartate 488, aspartate 490, arginine 492, and glutamate 497 each coordinate Ca(2+).

It belongs to the protein kinase superfamily. Ser/Thr protein kinase family. CDPK subfamily.

The enzyme catalyses L-seryl-[protein] + ATP = O-phospho-L-seryl-[protein] + ADP + H(+). It carries out the reaction L-threonyl-[protein] + ATP = O-phospho-L-threonyl-[protein] + ADP + H(+). Its activity is regulated as follows. Activated by calcium. Autophosphorylation may play an important role in the regulation of the kinase activity. May play a role in signal transduction pathways that involve calcium as a second messenger. The sequence is that of Calcium-dependent protein kinase 2 (CPK2) from Zea mays (Maize).